We begin with the raw amino-acid sequence, 287 residues long: 4-hydroxybenzoate octaprenyltransferase (287 aa).

The next 7 helical transmembrane spans lie at 30-50, 92-112, 133-153, 158-178, 207-227, 232-252, and 266-286; these read ALWI…FALG, IAIA…LNGL, FFAI…PMAF, DTVP…SVAY, VLAI…LGAA, WPYW…YTLI, and HNNW…ALAV.

This sequence belongs to the UbiA prenyltransferase family. Requires Mg(2+) as cofactor.

It localises to the cell inner membrane. The enzyme catalyses all-trans-octaprenyl diphosphate + 4-hydroxybenzoate = 4-hydroxy-3-(all-trans-octaprenyl)benzoate + diphosphate. The protein operates within cofactor biosynthesis; ubiquinone biosynthesis. Its function is as follows. Catalyzes the prenylation of para-hydroxybenzoate (PHB) with an all-trans polyprenyl group. Mediates the second step in the final reaction sequence of ubiquinone-8 (UQ-8) biosynthesis, which is the condensation of the polyisoprenoid side chain with PHB, generating the first membrane-bound Q intermediate 3-octaprenyl-4-hydroxybenzoate. The polypeptide is 4-hydroxybenzoate octaprenyltransferase (Burkholderia mallei (strain NCTC 10247)).